Reading from the N-terminus, the 404-residue chain is Serine palmitoyltransferase (404 aa).

Pyridoxal 5'-phosphate-binding positions include 112-113, Ser185, His213, and Thr241; that span reads GY. Lys244 carries the N6-(pyridoxal phosphate)lysine modification.

Belongs to the class-II pyridoxal-phosphate-dependent aminotransferase family. Pyridoxal 5'-phosphate is required as a cofactor.

The protein localises to the cytoplasm. It carries out the reaction L-serine + hexadecanoyl-CoA + H(+) = 3-oxosphinganine + CO2 + CoA. The protein operates within lipid metabolism; sphingolipid metabolism. Its function is as follows. Involved in de novo bacterial ceramide synthesis. Catalyzes the condensation of L-serine with palmitoyl-CoA (hexadecanoyl-CoA) to produce 3-oxosphinganine. Can also condense serine and C16:1-CoA, but shows a preference for palmitoyl-CoA. This chain is Serine palmitoyltransferase, found in Caulobacter vibrioides (strain NA1000 / CB15N) (Caulobacter crescentus).